A 422-amino-acid chain; its full sequence is 5'-deoxyadenosine deaminase (422 aa).

Residues His-57 and His-59 each contribute to the Zn(2+) site. Substrate contacts are provided by Glu-86 and His-178. His-205 lines the Zn(2+) pocket. Glu-208 and Asp-294 together coordinate substrate. Residue Asp-294 coordinates Zn(2+).

This sequence belongs to the metallo-dependent hydrolases superfamily. MTA/SAH deaminase family. Homotetramer. Zn(2+) is required as a cofactor.

The catalysed reaction is 5'-deoxyadenosine + H2O + H(+) = 5'-deoxyinosine + NH4(+). It carries out the reaction S-adenosyl-L-homocysteine + H2O + H(+) = S-inosyl-L-homocysteine + NH4(+). The enzyme catalyses S-methyl-5'-thioadenosine + H2O + H(+) = S-methyl-5'-thioinosine + NH4(+). It catalyses the reaction adenosine + H2O + H(+) = inosine + NH4(+). Its pathway is amino-acid biosynthesis; S-adenosyl-L-methionine biosynthesis. Catalyzes the deamination of three SAM-derived enzymatic products, namely 5'-deoxyadenosine, S-adenosyl-L-homocysteine, and 5'-methylthioadenosine, to produce the inosine analogs. Can also deaminate adenosine. The preferred substrate for this enzyme is 5'-deoxyadenosine, but all these substrates are efficiently deaminated. Likely functions in a S-adenosyl-L-methionine (SAM) recycling pathway from S-adenosyl-L-homocysteine (SAH) produced from SAM-dependent methylation reactions. May also be involved in the recycling of 5'-deoxyadenosine, whereupon the 5'-deoxyribose moiety of 5'-deoxyinosine is further metabolized to deoxyhexoses used for the biosynthesis of aromatic amino acids in methanogens. The sequence is that of 5'-deoxyadenosine deaminase from Methanococcus vannielii (strain ATCC 35089 / DSM 1224 / JCM 13029 / OCM 148 / SB).